The chain runs to 451 residues: Epi-neemfruitin B 7-O-acetyltransferse L7AT (451 aa).

Catalysis depends on proton acceptor residues H165 and D384.

The protein belongs to the plant acyltransferase family. Monomer. Mainly expressed in petioles and, to a lower extent, in roots.

It carries out the reaction epi-neemfruitin B + acetyl-CoA = 7-acetyl-epi-neemfruitin B + CoA. It functions in the pathway secondary metabolite biosynthesis; terpenoid biosynthesis. Functionally, acetyltransferase involved in the biosynthesis of limonoids triterpene natural products such as azadirachtin, an antifeedant widely used as bioinsecticide, and possessing many medicinal applications including anti-tumoral, anti-malarial, anti-rheumatic, antibacterial, anti-inflammatory, anti-pyretic and diuretic effects. Catalyzes the formation of 7-acetyl-epi-neemfruitin B from epi-neemfruitin B. In Melia azedarach (Chinaberry tree), this protein is Epi-neemfruitin B 7-O-acetyltransferse L7AT.